The chain runs to 434 residues: 4-hydroxyphenylpyruvate dioxygenase (434 aa).

The tract at residues 1-21 is disordered; the sequence is MPPTPTTPAATGAAAAVTPEH. Residues 7–19 are compositionally biased toward low complexity; that stretch reads TPAATGAAAAVTP. 2 consecutive VOC domains span residues 41–192 and 208–368; these read SFHH…FLPG and RFDH…IFTK. Residues His211, His293, and Glu379 each coordinate Fe cation.

The protein belongs to the 4HPPD family. It depends on Fe cation as a cofactor.

The protein resides in the cytoplasm. It carries out the reaction 3-(4-hydroxyphenyl)pyruvate + O2 = homogentisate + CO2. Its pathway is amino-acid degradation; L-phenylalanine degradation; acetoacetate and fumarate from L-phenylalanine: step 3/6. The protein operates within cofactor biosynthesis; prenylquinone biosynthesis. This chain is 4-hydroxyphenylpyruvate dioxygenase, found in Hordeum vulgare (Barley).